Consider the following 77-residue polypeptide: Translation initiation factor IF-1, chloroplastic (77 aa).

One can recognise an S1-like domain in the interval 1 to 71; the sequence is MKEQKWIHEG…TRGRIIYRLR (71 aa).

This sequence belongs to the IF-1 family. As to quaternary structure, component of the 30S ribosomal translation pre-initiation complex which assembles on the 30S ribosome in the order IF-2 and IF-3, IF-1 and N-formylmethionyl-tRNA(fMet); mRNA recruitment can occur at any time during PIC assembly.

The protein localises to the plastid. The protein resides in the chloroplast. Its function is as follows. One of the essential components for the initiation of protein synthesis. Stabilizes the binding of IF-2 and IF-3 on the 30S subunit to which N-formylmethionyl-tRNA(fMet) subsequently binds. Helps modulate mRNA selection, yielding the 30S pre-initiation complex (PIC). Upon addition of the 50S ribosomal subunit IF-1, IF-2 and IF-3 are released leaving the mature 70S translation initiation complex. The chain is Translation initiation factor IF-1, chloroplastic from Garrya elliptica (Wavyleaf silktassel).